Here is a 212-residue protein sequence, read N- to C-terminus: Hevein-like preproprotein (212 aa).

Positions 1–21 are cleaved as a signal peptide; the sequence is MKIRLSITIILLSYTVATVAG. In terms of domain architecture, Chitin-binding type-1 spans 22–64; the sequence is QQCGRQGGGRTCPGNICCSQYGYCGTTADYCSPTNNCQSNCWG. Cystine bridges form between C24–C39, C33–C45, C38–C52, C58–C62, C100–C132, C121–C155, and C135–C191. The Barwin domain occupies 72-193; sequence ESASNVRATY…VDYQFVDCGN (122 aa).

As to quaternary structure, CB-HEL interacts strongly with a fungal fruiting body lectin.

The protein resides in the vacuole. Fungal growth inhibitors. Neither CB-HEL nor CD-HEL have chitinase activity, but both have antimicrobial activities. CD-HEL has RNase, but no DNase activity. In Arabidopsis thaliana (Mouse-ear cress), this protein is Hevein-like preproprotein (HEL).